The primary structure comprises 152 residues: Globin, minor (152 aa).

The region spanning 12 to 152 (VNNSYHKDLL…ALIAVVQAAL (141 aa)) is the Globin domain. Histidine 104 serves as a coordination point for heme b.

This sequence belongs to the globin family.

In Anadara trapezia (Sydney cockle), this protein is Globin, minor.